A 465-amino-acid polypeptide reads, in one-letter code: A-type ATP synthase subunit B (465 aa).

Belongs to the ATPase alpha/beta chains family. In terms of assembly, has multiple subunits with at least A(3), B(3), C, D, E, F, H, I and proteolipid K(x).

It is found in the cell membrane. Component of the A-type ATP synthase that produces ATP from ADP in the presence of a proton gradient across the membrane. The B chain is a regulatory subunit. In Sulfurisphaera tokodaii (strain DSM 16993 / JCM 10545 / NBRC 100140 / 7) (Sulfolobus tokodaii), this protein is A-type ATP synthase subunit B.